A 633-amino-acid polypeptide reads, in one-letter code: ATP-dependent clpX-like chaperone, mitochondrial (633 aa).

A mitochondrion-targeting transit peptide spans 1 to 56 (MSSCGACTCGAAAARLLTTSLTSAQRGISCGRIHVPVLGRLGTLDTQILRRAPLRT). The interval 65-101 (ASKDGTNKDGSGDGNKKSVTEGSSKKSGSGNSGKGGN) is disordered. The segment covering 69 to 83 (GTNKDGSGDGNKKSV) has biased composition (basic and acidic residues). Residues 84–93 (TEGSSKKSGS) show a composition bias toward low complexity. One can recognise a ClpX-type ZB domain in the interval 93-146 (SGNSGKGGNQLRCPKCGDLCTHVETFVSSTRFVKCEKCHHFFVVLSEADSKKSI). Positions 105, 108, 127, and 130 each coordinate Zn(2+). 294–301 (PTGSGKTL) lines the ATP pocket. Residue K437 is modified to N6-acetyllysine. The span at 598–610 (KEPGYIRAPSKES) shows a compositional bias: basic and acidic residues. Residues 598–633 (KEPGYIRAPSKESSEEDYDSGVEEDGWPRQADAANS) are disordered. Positions 611–622 (SEEDYDSGVEED) are enriched in acidic residues. S617 bears the Phosphoserine mark.

This sequence belongs to the ClpX chaperone family. Homohexamer that forms a ring structure; this hexamerization requires ATP binding. Component of the ClpXP complex formed by the assembly of two CLPP heptameric rings with two CLPX hexameric rings, giving rise to a symmetrical structure with two central CLPP rings flanked by a CLPX ring at either end of the complex. Interacts with TFAM.

It localises to the mitochondrion. The protein resides in the mitochondrion matrix. Its subcellular location is the mitochondrion nucleoid. The enzyme catalyses ATP + H2O = ADP + phosphate + H(+). ATP-dependent chaperone that functions as an unfoldase. As part of the ClpXP protease complex, it recognizes specific protein substrates, unfolds them using energy derived from ATP hydrolysis, and then translocates them to the proteolytic subunit (CLPP) of the ClpXP complex for degradation. Thanks to its chaperone activity, it also functions in the incorporation of the pyridoxal phosphate cofactor into 5-aminolevulinate synthase, thereby activating 5-aminolevulinate (ALA) synthesis, the first step in heme biosynthesis. This chaperone is also involved in the control of mtDNA nucleoid distribution, by regulating mitochondrial transcription factor A (TFAM) activity. In Rattus norvegicus (Rat), this protein is ATP-dependent clpX-like chaperone, mitochondrial.